A 79-amino-acid chain; its full sequence is Small ribosomal subunit protein uS17 (79 aa).

The protein belongs to the universal ribosomal protein uS17 family. As to quaternary structure, part of the 30S ribosomal subunit.

In terms of biological role, one of the primary rRNA binding proteins, it binds specifically to the 5'-end of 16S ribosomal RNA. The polypeptide is Small ribosomal subunit protein uS17 (Caulobacter vibrioides (strain NA1000 / CB15N) (Caulobacter crescentus)).